The following is a 336-amino-acid chain: 4-hydroxy-3-methylbut-2-enyl diphosphate reductase (336 aa).

Cys-21 lines the [4Fe-4S] cluster pocket. (2E)-4-hydroxy-3-methylbut-2-enyl diphosphate is bound by residues His-50 and His-86. 2 residues coordinate dimethylallyl diphosphate: His-50 and His-86. Isopentenyl diphosphate is bound by residues His-50 and His-86. Cys-108 provides a ligand contact to [4Fe-4S] cluster. His-136 contacts (2E)-4-hydroxy-3-methylbut-2-enyl diphosphate. Dimethylallyl diphosphate is bound at residue His-136. His-136 lines the isopentenyl diphosphate pocket. Glu-138 (proton donor) is an active-site residue. Residue Thr-177 participates in (2E)-4-hydroxy-3-methylbut-2-enyl diphosphate binding. [4Fe-4S] cluster is bound at residue Cys-207. (2E)-4-hydroxy-3-methylbut-2-enyl diphosphate contacts are provided by Ser-235, Ser-236, Asn-237, and Ser-280. Dimethylallyl diphosphate-binding residues include Ser-235, Ser-236, Asn-237, and Ser-280. Isopentenyl diphosphate contacts are provided by Ser-235, Ser-236, Asn-237, and Ser-280.

It belongs to the IspH family. [4Fe-4S] cluster serves as cofactor.

It catalyses the reaction isopentenyl diphosphate + 2 oxidized [2Fe-2S]-[ferredoxin] + H2O = (2E)-4-hydroxy-3-methylbut-2-enyl diphosphate + 2 reduced [2Fe-2S]-[ferredoxin] + 2 H(+). It carries out the reaction dimethylallyl diphosphate + 2 oxidized [2Fe-2S]-[ferredoxin] + H2O = (2E)-4-hydroxy-3-methylbut-2-enyl diphosphate + 2 reduced [2Fe-2S]-[ferredoxin] + 2 H(+). It participates in isoprenoid biosynthesis; dimethylallyl diphosphate biosynthesis; dimethylallyl diphosphate from (2E)-4-hydroxy-3-methylbutenyl diphosphate: step 1/1. The protein operates within isoprenoid biosynthesis; isopentenyl diphosphate biosynthesis via DXP pathway; isopentenyl diphosphate from 1-deoxy-D-xylulose 5-phosphate: step 6/6. Functionally, catalyzes the conversion of 1-hydroxy-2-methyl-2-(E)-butenyl 4-diphosphate (HMBPP) into a mixture of isopentenyl diphosphate (IPP) and dimethylallyl diphosphate (DMAPP). Acts in the terminal step of the DOXP/MEP pathway for isoprenoid precursor biosynthesis. The chain is 4-hydroxy-3-methylbut-2-enyl diphosphate reductase from Mesorhizobium japonicum (strain LMG 29417 / CECT 9101 / MAFF 303099) (Mesorhizobium loti (strain MAFF 303099)).